The following is a 400-amino-acid chain: NADH-quinone oxidoreductase subunit D (400 aa).

It belongs to the complex I 49 kDa subunit family. In terms of assembly, NDH-1 is composed of 14 different subunits. Subunits NuoB, C, D, E, F, and G constitute the peripheral sector of the complex.

It is found in the cell inner membrane. It catalyses the reaction a quinone + NADH + 5 H(+)(in) = a quinol + NAD(+) + 4 H(+)(out). Functionally, NDH-1 shuttles electrons from NADH, via FMN and iron-sulfur (Fe-S) centers, to quinones in the respiratory chain. The immediate electron acceptor for the enzyme in this species is believed to be a menaquinone. Couples the redox reaction to proton translocation (for every two electrons transferred, four hydrogen ions are translocated across the cytoplasmic membrane), and thus conserves the redox energy in a proton gradient. This chain is NADH-quinone oxidoreductase subunit D, found in Pelodictyon phaeoclathratiforme (strain DSM 5477 / BU-1).